Reading from the N-terminus, the 787-residue chain is Glycine-rich domain-containing protein 2 (787 aa).

In terms of tissue distribution, expressed in leaves, inflorescences, buds, flowers and immature siliques.

Involved in development and stress responses, probably through an auxin-dependent mechanism. This Arabidopsis thaliana (Mouse-ear cress) protein is Glycine-rich domain-containing protein 2.